The chain runs to 474 residues: Tubulin gamma-1 chain (474 aa).

142 to 148 (AGGTGSG) contacts GTP.

It belongs to the tubulin family. Gamma-tubulin complex is composed of gamma-tubulin and GCP proteins.

It is found in the cytoplasm. The protein localises to the cytoskeleton. The protein resides in the microtubule organizing center. Its subcellular location is the nucleus. It localises to the cell cortex. Tubulin is the major constituent of microtubules. The gamma chain is found at microtubule organizing centers (MTOC) such as the spindle poles, suggesting that it is involved in the minus-end nucleation of microtubule assembly. Functionally, gamma-tubulin complex is essential for the control of microtubular network remodeling in the course of initiation and development of giant-feeding cells, and for the successful reproduction of nematodes (e.g. Meloidogyne spp.) in their plant hosts. The sequence is that of Tubulin gamma-1 chain (TUBG1) from Arabidopsis thaliana (Mouse-ear cress).